The sequence spans 130 residues: Small ribosomal subunit protein uS9 (130 aa).

The segment at 109-130 is disordered; the sequence is RKKERKKYGQRAARARFQYSKR.

Belongs to the universal ribosomal protein uS9 family.

This is Small ribosomal subunit protein uS9 from Oleidesulfovibrio alaskensis (strain ATCC BAA-1058 / DSM 17464 / G20) (Desulfovibrio alaskensis).